Consider the following 597-residue polypeptide: Probable translation initiation factor IF-2 (597 aa).

In terms of domain architecture, tr-type G spans 4 to 221 (IRQPIIAVLG…LISGLAQKYL (218 aa)). The G1 stretch occupies residues 13 to 20 (GHVDHGKT). Position 13–20 (13–20 (GHVDHGKT)) interacts with GTP. Residues 38–42 (GITQH) are G2. The G3 stretch occupies residues 77 to 80 (DTPG). GTP contacts are provided by residues 77-81 (DTPGH) and 131-134 (NKID). The interval 131–134 (NKID) is G4. Positions 199 to 201 (SAK) are G5.

This sequence belongs to the TRAFAC class translation factor GTPase superfamily. Classic translation factor GTPase family. IF-2 subfamily.

Functionally, function in general translation initiation by promoting the binding of the formylmethionine-tRNA to ribosomes. Seems to function along with eIF-2. The protein is Probable translation initiation factor IF-2 of Thermococcus sibiricus (strain DSM 12597 / MM 739).